The primary structure comprises 108 residues: Glutaredoxin 4 (108 aa).

The region spanning 4-106 (FQKIKKQIQD…KLILKVKKKY (103 aa)) is the Glutaredoxin domain. A glutathione-binding site is contributed by Lys21. Cys29 is a [2Fe-2S] cluster binding site. Glutathione-binding positions include Arg58, Phe70, and 83-84 (CS).

It belongs to the glutaredoxin family. Monothiol subfamily. As to quaternary structure, homodimer.

The protein localises to the cytoplasm. Its function is as follows. Monothiol glutaredoxin involved in the biogenesis of iron-sulfur clusters. This is Glutaredoxin 4 (grxD) from Buchnera aphidicola subsp. Acyrthosiphon pisum (strain APS) (Acyrthosiphon pisum symbiotic bacterium).